The sequence spans 1030 residues: MENQGGDYSPNGFSNSASNMNAVFNNEITGRSDISNVNHQTGTPRLVPETQIWSMPVPDQLMTMPNRENTLMTGSTIGPNIPMNVAYPNTIYSPTEHQSQFQTQQNRDISTMMEHTNSNDMSGSGKNLKKRVSKACDHCRKRKIRCDEVDQQTKKCSNCIKFQLPCTFKHRDEILKKKRKLEIKHHATPGESLQTSNSISNPVASSSVPNSGRFELLNGNSPLESNIIDKVSNIQNNLNKKMNSKIEKLDRKMSYIIDSVARLEWLLDKAVKKQEGKYKEKNNLPKPARKIYSTALLTAQKLYWFKQSLGVKASNEEFLSPISEILSISLKWYATQMKKFMDLSSPAFFSSEIILYSLPPKKQAKRLLENFHATLLSSVTGIISLKECLDLAEKYYSESGEKLTYPEHLLLNVCLCSGASATQSIIRGDSKFLRKDRYDPTSQELKKIENVALLNAMYYYHKLSTICSGTRTLQALLLLNRYFQLTYDTELANCILGTAIRLAVDMELNRKSSYKSLDFEEAIRRRRMWWHCFCTDKLYSLMLSRPPIVGERDMDMLTDQNYYEVIKTNILPDLIDKKEDLDKITDVNSALNVVVNFCQHISLFISYYVSKLVSIESKIYSTCFAVRSTLDLSFDAMLDKIKDLNDSLNNWRDNLHVSMKLKSYKQYLSVLYAQKSQENPALSFEIACSRVLNCHFRALYSKVILSMMTTSLLIDNERLYKGSRHDIPQLFILFSSQYLNASKEMLQLFQGINYQAHMYNEVMYQFSTAMFVLFFYVVDNMNDLKKKGEVKEIIDILKKSYDRLVGENDEQLLFDNVKWNTLIVFYSHFLKYVLQRYHALNDSTSIFDSKPYDETITKVIMHSRKIKDETVDQLIMSLKSYGSLHSLQKGNEADLADDGLNTNDISSEDFAEEAPINLFGELSVEILKLLKSHSPISNFGDLSPSSNRKGISDDSSLYPIRSDLTSLVYPIHSSDTGDTLSSGLETPENSNFNSDSGIKEDFEAFRALLPLGKLIYDRDYSFVNTFRDYE.

The segment at residues 136–166 is a DNA-binding region (zn(2)-C6 fungal-type); that stretch reads CDHCRKRKIRCDEVDQQTKKCSNCIKFQLPC. The disordered stretch occupies residues 185–208; that stretch reads HHATPGESLQTSNSISNPVASSSV. A compositionally biased stretch (low complexity) spans 196–208; it reads SNSISNPVASSSV. 2 positions are modified to phosphoserine: Ser-221 and Ser-937.

Its subcellular location is the cytoplasm. The protein resides in the nucleus. In terms of biological role, putative transcription factor involved in halotolerance. This is Halotolerance protein 9 (HAL9) from Saccharomyces cerevisiae (strain ATCC 204508 / S288c) (Baker's yeast).